The following is a 354-amino-acid chain: ATP-dependent (S)-NAD(P)H-hydrate dehydratase (354 aa).

Positions 42 to 350 (AENILRAITP…ECLGRSLEDI (309 aa)) constitute a YjeF C-terminal domain. (6S)-NADPHX contacts are provided by residues G155 and 208–214 (NVNEYKR). Residues 248–252 (KGKSD) and 267–276 (GSPRRCGGQG) contribute to the ATP site. Position 277 (D277) interacts with (6S)-NADPHX.

The protein belongs to the NnrD/CARKD family. Requires Mg(2+) as cofactor.

It catalyses the reaction (6S)-NADHX + ATP = ADP + phosphate + NADH + H(+). It carries out the reaction (6S)-NADPHX + ATP = ADP + phosphate + NADPH + H(+). Catalyzes the dehydration of the S-form of NAD(P)HX at the expense of ATP, which is converted to ADP. Together with NAD(P)HX epimerase, which catalyzes the epimerization of the S- and R-forms, the enzyme allows the repair of both epimers of NAD(P)HX, a damaged form of NAD(P)H that is a result of enzymatic or heat-dependent hydration. The sequence is that of ATP-dependent (S)-NAD(P)H-hydrate dehydratase from Vitis vinifera (Grape).